Here is a 156-residue protein sequence, read N- to C-terminus: MLYKNINEFEQVIDKTKRIMCLDFGEKKIGVALSDKTNLIAIPHSVYVRKNTRKDLGSLYGILIENDAGSMVIGLPLDLFGMGNELCDKVMLFANRMIKKYAINIYLHDERYSTAMATRVAKLANIKRKESQKIDDKIAAVLILQQVLDMVKIYQM.

This sequence belongs to the YqgF nuclease family.

The protein resides in the cytoplasm. In terms of biological role, could be a nuclease involved in processing of the 5'-end of pre-16S rRNA. The sequence is that of Putative pre-16S rRNA nuclease from Ehrlichia ruminantium (strain Welgevonden).